Reading from the N-terminus, the 78-residue chain is U23-theraphotoxin-Cg1a 1 (78 aa).

The N-terminal stretch at Met-1–Ala-21 is a signal peptide. The propeptide occupies Ser-22–Arg-49. Disulfide bonds link Cys-50–Cys-64, Cys-57–Cys-69, and Cys-63–Cys-75.

The protein belongs to the neurotoxin 10 (Hwtx-1) family. 64 (Jztx-20) subfamily. Expressed by the venom gland.

The protein localises to the secreted. Probable ion channel inhibitor. The chain is U23-theraphotoxin-Cg1a 1 from Chilobrachys guangxiensis (Chinese earth tiger tarantula).